Reading from the N-terminus, the 119-residue chain is uncharacterized protein (119 aa).

2 consecutive transmembrane segments (helical) span residues 19–39 (FYPS…PSFL) and 68–88 (FPWF…PWLL).

The protein localises to the membrane. This is an uncharacterized protein from Saccharomyces cerevisiae (strain ATCC 204508 / S288c) (Baker's yeast).